The chain runs to 225 residues: PKHD-type hydroxylase KPK_3192 (225 aa).

The Fe2OG dioxygenase domain occupies 78–177 (TISAPLFNRY…RQASFLWIQS (100 aa)). Fe cation-binding residues include His96, Asp98, and His158. 2-oxoglutarate is bound at residue Arg168.

The cofactor is Fe(2+). Requires L-ascorbate as cofactor.

The sequence is that of PKHD-type hydroxylase KPK_3192 from Klebsiella pneumoniae (strain 342).